Reading from the N-terminus, the 215-residue chain is tRNA (guanine-N(7)-)-methyltransferase (215 aa).

S-adenosyl-L-methionine-binding residues include E44, E69, D96, and D118. D118 is a catalytic residue. K122 is a binding site for substrate. The segment at R124 to R129 is interaction with RNA. Residues D154 and T192–E195 contribute to the substrate site.

This sequence belongs to the class I-like SAM-binding methyltransferase superfamily. TrmB family.

The catalysed reaction is guanosine(46) in tRNA + S-adenosyl-L-methionine = N(7)-methylguanosine(46) in tRNA + S-adenosyl-L-homocysteine. It functions in the pathway tRNA modification; N(7)-methylguanine-tRNA biosynthesis. Catalyzes the formation of N(7)-methylguanine at position 46 (m7G46) in tRNA. In Limosilactobacillus fermentum (strain NBRC 3956 / LMG 18251) (Lactobacillus fermentum), this protein is tRNA (guanine-N(7)-)-methyltransferase.